The primary structure comprises 92 residues: Small ribosomal subunit protein bS18 (92 aa).

The protein belongs to the bacterial ribosomal protein bS18 family. As to quaternary structure, part of the 30S ribosomal subunit. Forms a tight heterodimer with protein bS6.

Its function is as follows. Binds as a heterodimer with protein bS6 to the central domain of the 16S rRNA, where it helps stabilize the platform of the 30S subunit. This Cupriavidus necator (strain ATCC 17699 / DSM 428 / KCTC 22496 / NCIMB 10442 / H16 / Stanier 337) (Ralstonia eutropha) protein is Small ribosomal subunit protein bS18.